We begin with the raw amino-acid sequence, 210 residues long: ATP-dependent Clp protease proteolytic subunit (210 aa).

The Nucleophile role is filled by Ser-107. His-132 is a catalytic residue.

Belongs to the peptidase S14 family. Fourteen ClpP subunits assemble into 2 heptameric rings which stack back to back to give a disk-like structure with a central cavity, resembling the structure of eukaryotic proteasomes.

The protein localises to the cytoplasm. It carries out the reaction Hydrolysis of proteins to small peptides in the presence of ATP and magnesium. alpha-casein is the usual test substrate. In the absence of ATP, only oligopeptides shorter than five residues are hydrolyzed (such as succinyl-Leu-Tyr-|-NHMec, and Leu-Tyr-Leu-|-Tyr-Trp, in which cleavage of the -Tyr-|-Leu- and -Tyr-|-Trp bonds also occurs).. Cleaves peptides in various proteins in a process that requires ATP hydrolysis. Has a chymotrypsin-like activity. Plays a major role in the degradation of misfolded proteins. The chain is ATP-dependent Clp protease proteolytic subunit from Zymomonas mobilis subsp. mobilis (strain ATCC 31821 / ZM4 / CP4).